Here is a 481-residue protein sequence, read N- to C-terminus: GDP-fucose protein O-fucosyltransferase 3 (481 aa).

Over 1-8 (MVRFQRRK) the chain is Cytoplasmic. Residues 9-31 (LLASCLCVTATVFLMVTLQVVVE) form a helical; Signal-anchor for type II membrane protein membrane-spanning segment. The Lumenal segment spans residues 32-481 (LGKFERKKLK…EEFWALVFKD (450 aa)). N-linked (GlcNAc...) asparagine glycosylation is found at Asn110, Asn168, and Asn318. An intrachain disulfide couples Cys389 to Cys392. Asn468 carries N-linked (GlcNAc...) asparagine glycosylation.

The protein belongs to the glycosyltransferase 10 family. As to expression, widely expressed, with a higher expression in liver and thymus.

The protein resides in the endoplasmic reticulum membrane. It catalyses the reaction L-threonyl-[protein] + GDP-beta-L-fucose = 3-O-(alpha-L-fucosyl)-L-threonyl-[protein] + GDP + H(+). The enzyme catalyses L-seryl-[protein] + GDP-beta-L-fucose = 3-O-(alpha-L-fucosyl)-L-seryl-[protein] + GDP + H(+). It participates in protein modification; protein glycosylation. In terms of biological role, protein O-fucosyltransferase that specifically catalyzes O-fucosylation of serine or threonine residues in EMI domains of target proteins, such as MMRN1, MMRN2 and EMID1. Attaches fucose through an O-glycosidic linkage. O-fucosylation of EMI domain-containing proteins may be required for facilitating protein folding and secretion. May also show alpha-(1,3)-fucosyltransferase activity toward the innermost N-acetyl glucosamine (GlcNAc) residue in biantennary N-glycan acceptors. However, this was tested with a library of synthetic substrates and this activity is unsure in vivo. May be involved in biosynthesis of Lewis X-carrying biantennary N-glycans that regulate neuron stem cell self-renewal during brain development. The sequence is that of GDP-fucose protein O-fucosyltransferase 3 from Mus musculus (Mouse).